A 278-amino-acid chain; its full sequence is Sulfide dehydrogenase subunit beta (278 aa).

A propeptide spanning residues M1–I4 is cleaved from the precursor. In terms of domain architecture, FAD-binding FR-type spans M1–I95. Residues C222, C225, and C237 each contribute to the [2Fe-2S] cluster site.

As to quaternary structure, heterodimer of alpha and beta subunits. The cofactor is FAD. Requires [2Fe-2S] cluster as cofactor.

It localises to the cytoplasm. The catalysed reaction is n sulfur + hydrogen sulfide + NADP(+) = (n+1) sulfur + NADPH. The enzyme catalyses 2 reduced [2Fe-2S]-[ferredoxin] + NADP(+) + H(+) = 2 oxidized [2Fe-2S]-[ferredoxin] + NADPH. Functionally, a bifunctional enzyme that catalyzes the reduction of elemental sulfur or polysulfide to hydrogen sulfide with NADPH as electron donor. Also functions as a reduced ferredoxin:NADP oxidoreductase with a very high affinity for reduced ferredoxin. Exhibits a broad specificity for various physiological and non-physiological substrates with varied reduction potentials such as methyl viologen, benzyl viologen, FAD, FMN, methylene blue, 2,6-dichlorophenolindophenol (DCIP), cytochrome C and ferricyanide with highest preference for benzyl viologen. Does not reduce fumarate, succinate, nitrate, nitrite, sulfate, sulfite or protons. Does not possess any hydrogenase activity or NADPH-dependent glutamate synthase activity. The protein is Sulfide dehydrogenase subunit beta of Pyrococcus furiosus (strain ATCC 43587 / DSM 3638 / JCM 8422 / Vc1).